We begin with the raw amino-acid sequence, 380 residues long: Reducing-end xylose-releasing exo-oligoxylanase Rex8A (380 aa).

The Proton donor role is filled by E70. Catalysis depends on D265, which acts as the Proton acceptor.

The protein belongs to the glycosyl hydrolase 8 (cellulase D) family.

It catalyses the reaction Hydrolysis of (1-&gt;4)-beta-D-xylose residues from the reducing end of oligosaccharides.. It participates in glycan degradation; xylan degradation. Its function is as follows. Involved in depolymerization of xylan, a major component of the lignocellulosic substrates. Acts as an exo-oligoxylanase that efficiently hydrolyzes xylooligosaccharides, releasing xylose from their reducing ends. Hydrolyzes xylooligomers of 3 to 6 xylose units to xylose and xylobiose. Besides linear xylooligosaccharides, also hydrolyzes branched xylooligomers, such as xylooligomers decorated with 4-O-methyl-D-glucuronic acid moieties. Its proposed role is the degradation of xylooligomers produced by the activity of extracellular xylanases once they have been transported inside cells. Shows minor activity on polymeric xylan (glucuronoxylan from beechwood). Is not active on cellooligosaccharides or cellulosic substrates, or on other polysaccharides such as pectin, polygalacturonic acid, laminarin, or lichenan. The protein is Reducing-end xylose-releasing exo-oligoxylanase Rex8A of Paenibacillus barcinonensis.